The primary structure comprises 162 residues: MRVGFGYDVHKLVEGRPLVLGGVSIPFVKGLLGHSDADVLAHAVMDALLGAAGAGDIGRHFPDNDGRYKGISSMKLLARVGDILSRQGLAVVNIDSVVVAQGPKLSPFIEEMQKRMAGALQIQPSQVSVKATTTEGLGFAGKGEGIAAYAVALVHKTGQAAT.

A divalent metal cation contacts are provided by Asp-8 and His-10. 4-CDP-2-C-methyl-D-erythritol 2-phosphate is bound by residues 8–10 (DVH) and 34–35 (HS). Residue His-42 participates in a divalent metal cation binding. 4-CDP-2-C-methyl-D-erythritol 2-phosphate-binding positions include 56-58 (DIG), 61-65 (FPDND), 132-135 (TTTE), Phe-139, and Lys-142.

It belongs to the IspF family. As to quaternary structure, homotrimer. Requires a divalent metal cation as cofactor.

The enzyme catalyses 4-CDP-2-C-methyl-D-erythritol 2-phosphate = 2-C-methyl-D-erythritol 2,4-cyclic diphosphate + CMP. Its pathway is isoprenoid biosynthesis; isopentenyl diphosphate biosynthesis via DXP pathway; isopentenyl diphosphate from 1-deoxy-D-xylulose 5-phosphate: step 4/6. Involved in the biosynthesis of isopentenyl diphosphate (IPP) and dimethylallyl diphosphate (DMAPP), two major building blocks of isoprenoid compounds. Catalyzes the conversion of 4-diphosphocytidyl-2-C-methyl-D-erythritol 2-phosphate (CDP-ME2P) to 2-C-methyl-D-erythritol 2,4-cyclodiphosphate (ME-CPP) with a corresponding release of cytidine 5-monophosphate (CMP). This is 2-C-methyl-D-erythritol 2,4-cyclodiphosphate synthase from Pelotomaculum thermopropionicum (strain DSM 13744 / JCM 10971 / SI).